The chain runs to 158 residues: Glycine/sarcosine/betaine reductase complex component A1 (158 aa).

Selenocysteine 46 is an active-site residue. A non-standard amino acid (selenocysteine) is located at residue selenocysteine 46.

The protein belongs to the GrdA family. In terms of assembly, monomer. Component of the glycine, sarcosine and betaine reductase complexes, together with components B and C.

The catalysed reaction is acetyl phosphate + [thioredoxin]-disulfide + NH4(+) + H2O = [thioredoxin]-dithiol + glycine + phosphate + H(+). The enzyme catalyses acetyl phosphate + methylamine + [thioredoxin]-disulfide + H2O = sarcosine + [thioredoxin]-dithiol + phosphate + H(+). It catalyses the reaction acetyl phosphate + trimethylamine + [thioredoxin]-disulfide + H2O = glycine betaine + [thioredoxin]-dithiol + phosphate + H(+). In terms of biological role, in the first step of glycine, betaine and sarcosine reductases, the substrate is bound to component PB via a Schiff base intermediate. Then the PB-activated substrate is nucleophilically attacked by the selenol anion of component PA to transform it to a carboxymethylated selenoether and the respective amine. By action of component PC, acetyl phosphate is formed, leaving component PA in its oxidized state. Finally component PA becomes reduced by the thioredoxin system to start a new catalytic cycle of reductive deamination. This Photobacterium profundum (strain SS9) protein is Glycine/sarcosine/betaine reductase complex component A1 (grdA1).